The primary structure comprises 343 residues: S-adenosylmethionine:tRNA ribosyltransferase-isomerase (343 aa).

This sequence belongs to the QueA family. Monomer.

It localises to the cytoplasm. The enzyme catalyses 7-aminomethyl-7-carbaguanosine(34) in tRNA + S-adenosyl-L-methionine = epoxyqueuosine(34) in tRNA + adenine + L-methionine + 2 H(+). It functions in the pathway tRNA modification; tRNA-queuosine biosynthesis. Transfers and isomerizes the ribose moiety from AdoMet to the 7-aminomethyl group of 7-deazaguanine (preQ1-tRNA) to give epoxyqueuosine (oQ-tRNA). This Geotalea uraniireducens (strain Rf4) (Geobacter uraniireducens) protein is S-adenosylmethionine:tRNA ribosyltransferase-isomerase.